A 43-amino-acid chain; its full sequence is Holotricin-1 (43 aa).

Intrachain disulfides connect Cys-3–Cys-34, Cys-20–Cys-39, and Cys-24–Cys-41.

Belongs to the invertebrate defensin family. Type 1 subfamily. Hemolymph.

The protein resides in the secreted. Shows potent antibacterial activity against Gram-positive bacteria. The sequence is that of Holotricin-1 from Holotrichia diomphalia (Korean black chafer).